Consider the following 168-residue polypeptide: uncharacterized protein (168 aa).

Residues 1–15 (MKEASDREEAPKMVE) show a composition bias toward basic and acidic residues. The disordered stretch occupies residues 1–36 (MKEASDREEAPKMVEKNYSTGFRKAHGEKDQSVTKP).

The protein localises to the cytoplasm. This is an uncharacterized protein from Saccharomyces cerevisiae (strain ATCC 204508 / S288c) (Baker's yeast).